Here is a 291-residue protein sequence, read N- to C-terminus: uncharacterized protein (291 aa).

A disordered region spans residues 1 to 82 (MEAEKETEQE…SYSSSPFETH (82 aa)). Low complexity-rich tracts occupy residues 28–43 (HSHSMSSPIHSSISAS) and 59–78 (STSSSSSSSSSPLTSYSSSP).

This is an uncharacterized protein from Arabidopsis thaliana (Mouse-ear cress).